The chain runs to 149 residues: Epoxide hydrolase EphG (149 aa).

Aspartate 93 serves as the catalytic Proton donor. Aspartate 122 acts as the Proton acceptor in catalysis.

Belongs to the limonene-1,2-epoxide hydrolase family. Homodimer. Is also present as monomer in solution.

It catalyses the reaction an epoxide + H2O = an ethanediol. The enzyme catalyses 5,6alpha-epoxy-5alpha-cholestan-3beta-ol + H2O = 5alpha-cholestane-3beta,5,6beta-triol. It carries out the reaction 5,6beta-epoxy-5beta-cholestan-3beta-ol + H2O = 5alpha-cholestane-3beta,5,6beta-triol. Its activity is regulated as follows. Is inhibited by the anti-epileptic drug valpromide (Ki value of about 100 uM). Functionally, epoxide hydrolase capable of hydrolyzing long or bulky lipophilic epoxides such as 9,10-epoxystearic acid and cholesterol 5,6-oxide in vitro. The physiological substrates have yet to be identified, but could be fatty acid or steroid derivatives. This is Epoxide hydrolase EphG (ephG) from Mycobacterium tuberculosis (strain ATCC 25618 / H37Rv).